A 251-amino-acid polypeptide reads, in one-letter code: Gamma-gliadin (251 aa).

Residues Met1 to Ala19 form the signal peptide. The tract at residues Ser26–Pro143 is disordered. The span at Gln42–Gln81 shows a compositional bias: low complexity. The segment covering Gln82–Pro99 has biased composition (pro residues). The span at Phe100–Gln139 shows a compositional bias: low complexity.

The protein belongs to the gliadin/glutenin family.

Gliadin is the major seed storage protein in wheat. This Triticum aestivum (Wheat) protein is Gamma-gliadin.